An 87-amino-acid polypeptide reads, in one-letter code: Acyl carrier protein TtuC (87 aa).

A Carrier domain is found at 11 to 87 (ITAEDVQQWL…HALSQFIAAK (77 aa)). O-(pantetheine 4'-phosphoryl)serine is present on serine 48.

The cofactor is pantetheine 4'-phosphate.

Functionally, carrier protein likely involved in the biosynthesis of a polyyne metabolite. Accepts as substrate the activated form of decanoic acid from TtuA. This Teredinibacter turnerae (strain ATCC 39867 / T7901) protein is Acyl carrier protein TtuC.